We begin with the raw amino-acid sequence, 303 residues long: Coenzyme PQQ synthesis protein B (303 aa).

It belongs to the PqqB family.

Its pathway is cofactor biosynthesis; pyrroloquinoline quinone biosynthesis. In terms of biological role, may be involved in the transport of PQQ or its precursor to the periplasm. The protein is Coenzyme PQQ synthesis protein B of Pseudomonas syringae pv. tomato (strain ATCC BAA-871 / DC3000).